The chain runs to 146 residues: Hemoglobin subunit beta (146 aa).

In terms of domain architecture, Globin spans H2–H146. The heme b site is built by H63 and H92.

This sequence belongs to the globin family. In terms of assembly, heterotetramer of two alpha chains and two beta chains. As to expression, red blood cells.

Involved in oxygen transport from the lung to the various peripheral tissues. The protein is Hemoglobin subunit beta (HBB) of Eudyptes chrysocome (Western rockhopper penguin).